An 82-amino-acid chain; its full sequence is Small ribosomal subunit protein uS17 (82 aa).

It belongs to the universal ribosomal protein uS17 family. Part of the 30S ribosomal subunit.

In terms of biological role, one of the primary rRNA binding proteins, it binds specifically to the 5'-end of 16S ribosomal RNA. This chain is Small ribosomal subunit protein uS17, found in Shewanella halifaxensis (strain HAW-EB4).